Reading from the N-terminus, the 272-residue chain is Cell wall synthesis protein Wag31 (272 aa).

Disordered stretches follow at residues 1–22 (MPLT…GKRG) and 62–109 (AARS…SEDT). Residues 30–67 (AFLDLVENELTRLIEENADLRQRVAELDQELAAARSGA) are a coiled coil. Low complexity-rich tracts occupy residues 62 to 76 (AARS…ATSS) and 94 to 105 (VYEAPAQPAAPQ). T74 bears the Phosphothreonine mark. Positions 139–206 (LSDARAQAEA…AERKHSEIMG (68 aa)) form a coiled coil. Positions 243 to 272 (ELGQRGSAAPVDSSANSDASGFGQFNRGNN) are disordered.

The protein belongs to the DivIVA family. As to quaternary structure, forms homooligomers. Interacts with PbpB and CwsA. Post-translationally, phosphorylated by PknA.

Its subcellular location is the cytoplasm. Important for maintaining cell shape and cell wall integrity by localizing peptidoglycan synthesis to the cell poles. Protects PbpB (PBP3, FtsI) from oxidative stress-induced cleavage. The protein is Cell wall synthesis protein Wag31 (wag31) of Mycolicibacterium smegmatis (strain ATCC 700084 / mc(2)155) (Mycobacterium smegmatis).